Reading from the N-terminus, the 498-residue chain is MDTITVVENVFGEVERKVQKSYWEEHSKDLTVESMMLDSRAKDLDKEERPEVLAILPSYAGKTVLELGAGIGRFTGELAKEAGHVIALDFIDSVIKKNEEINGDIYKNITFMCADVTSPELKIEDNSVDIVFSNWLLMYLNDEEVEKLIGRIVKWLKPGGHIFIRESCFHQSGDSKRKVNPTHYREPRFYTKVFKECHSYDQEGNSFELSLVTSKCIGAYVKSKKNQNQICWLWEKVKCTEDKGFQRFLDNVQYKSTGILRYERVFGEGYVSTGGFETTKEFVDKLDLKAGQKVLDVGCGIGGGDFYMAETYDVHVLGIDLSINMVSFAIERAIGRSCSVEFEVADCTTKEYAENTFDVIYSRDTILHIQDKPALFRNFFKWLKPGGKVLISDYCRSPGTPSEEFAAYIKQRGYDLHDVKTYGKMLEDAGFHDVVAEDRTDQFLRVLERELGETEKNKEAFLADFTQEDYDDIVNGWSAKLKRSSAGEQKWGLFIATK.

Positions 68, 73, 89, 115, 116, and 134 each coordinate S-adenosyl-L-homocysteine. The phosphocholine site is built by Ser-167, Ser-172, Gly-173, Arg-177, and Tyr-184. N-methylethanolamine phosphate is bound by residues 253-254 (QY) and Tyr-262. Tyr-262 serves as a coordination point for phosphocholine. S-adenosyl-L-homocysteine is bound by residues Val-271, Ser-272, Gly-298, Asp-320, Asp-346, Cys-347, and Arg-363. The phosphocholine site is built by Tyr-394, Tyr-408, Arg-412, Tyr-414, and Lys-480. N-methylethanolamine phosphate contacts are provided by residues Tyr-394, Tyr-408, 412–414 (RGY), and Lys-480.

The protein belongs to the class I-like SAM-binding methyltransferase superfamily. PEAMT family.

The catalysed reaction is phosphoethanolamine + S-adenosyl-L-methionine = N-methylethanolamine phosphate + S-adenosyl-L-homocysteine + H(+). It catalyses the reaction N-methylethanolamine phosphate + S-adenosyl-L-methionine = N,N-dimethylethanolamine phosphate + S-adenosyl-L-homocysteine + H(+). The enzyme catalyses N,N-dimethylethanolamine phosphate + S-adenosyl-L-methionine = phosphocholine + S-adenosyl-L-homocysteine + H(+). It participates in phospholipid metabolism; phosphatidylcholine biosynthesis; phosphocholine from phosphoethanolamine: step 1/1. Inhibited by phosphatidic acid. Functionally, involved in phosphocholine biosynthesis. Catalyzes the N-methylation of phosphoethanolamine, phosphomonomethylethanolamine and phosphodimethylethanolamine, the three methylation steps required to convert phosphoethanolamine to phosphocholine (PC). In Triticum aestivum (Wheat), this protein is Phosphoethanolamine N-methyltransferase 1.